Reading from the N-terminus, the 468-residue chain is Glucose-dependent insulinotropic receptor (468 aa).

Residues methionine 1–serine 6 are Extracellular-facing. The chain crosses the membrane as a helical span at residues phenylalanine 7 to valine 27. The Cytoplasmic portion of the chain corresponds to alanine 28 to aspartate 37. The helical transmembrane segment at glycine 38 to isoleucine 58 threads the bilayer. The Extracellular segment spans residues serine 59–arginine 81. A helical membrane pass occupies residues methionine 82–aspartate 102. Topologically, residues arginine 103–cysteine 125 are cytoplasmic. Residues isoleucine 126–phenylalanine 146 traverse the membrane as a helical segment. The Extracellular portion of the chain corresponds to glutamine 147–arginine 164. The helical transmembrane segment at phenylalanine 165–tyrosine 185 threads the bilayer. Topologically, residues cysteine 186–threonine 226 are cytoplasmic. Residues valine 227–valine 247 form a helical membrane-spanning segment. Residues glutamine 248–lysine 262 lie on the Extracellular side of the membrane. A helical transmembrane segment spans residues tyrosine 263–glutamine 283. Topologically, residues arginine 284–glycine 468 are cytoplasmic.

This sequence belongs to the G-protein coupled receptor 1 family. As to expression, expression restricted to the beta-cells of pancreatic islets.

It localises to the cell membrane. Its function is as follows. Receptor for the endogenous fatty-acid ethanolamide oleoylethanolamide (OEA) and lysophosphatidylcholine (LPC). Functions as a glucose-dependent insulinotropic receptor. The activity of this receptor is mediated by G proteins which activate adenylate cyclase. Seems to act through a G(s) mediated pathway. The chain is Glucose-dependent insulinotropic receptor (Gpr119) from Rattus norvegicus (Rat).